Reading from the N-terminus, the 760-residue chain is Ring-infected erythrocyte surface antigen (760 aa).

A disordered region spans residues 214-300 (DTSQEESVEE…SDVQQTSEAA (87 aa)). Residues 216–230 (SQEESVEENEEEHTV) show a composition bias toward acidic residues. Residues 231 to 242 (DDEHVEEHTADD) show a composition bias toward basic and acidic residues. The span at 243 to 256 (EHVEEPTVADDEHV) shows a compositional bias: acidic residues. Residues 262 to 288 (ADEHVEEPTVAEEHVEEPTVAEEHVEE) are compositionally biased toward basic and acidic residues. In terms of domain architecture, J spans 307–375 (DTLYYDILGV…KRWYNKYGYD (69 aa)). N-linked (GlcNAc...) asparagine glycosylation is found at Asn425, Asn559, and Asn563. The span at 683-692 (EHDAEENVEH) shows a compositional bias: basic and acidic residues. Residues 683-738 (EHDAEENVEHDAEENAEENVEENVEEVEENVEENVEENVGEKKMRREEKKKRVQEP) form a disordered region. Positions 693-720 (DAEENAEENVEENVEEVEENVEENVEEN) are enriched in acidic residues.

The protein localises to the cell membrane. In terms of biological role, may disrupt the normal intermolecular interactions of the cytoplasmic domain of band 3 and thereby facilitate the invagination of the red cell membrane which is necessary for the formation of the parasitophorous vacuole. In Plasmodium falciparum (isolate NF7 / Ghana), this protein is Ring-infected erythrocyte surface antigen (RESA).